The following is a 185-amino-acid chain: Large ribosomal subunit protein uL5 (185 aa).

Belongs to the universal ribosomal protein uL5 family. As to quaternary structure, part of the 50S ribosomal subunit; part of the 5S rRNA/L5/L18/L25 subcomplex. Contacts the 5S rRNA and the P site tRNA. Forms a bridge to the 30S subunit in the 70S ribosome.

In terms of biological role, this is one of the proteins that bind and probably mediate the attachment of the 5S RNA into the large ribosomal subunit, where it forms part of the central protuberance. In the 70S ribosome it contacts protein S13 of the 30S subunit (bridge B1b), connecting the 2 subunits; this bridge is implicated in subunit movement. Contacts the P site tRNA; the 5S rRNA and some of its associated proteins might help stabilize positioning of ribosome-bound tRNAs. This chain is Large ribosomal subunit protein uL5, found in Bartonella henselae (strain ATCC 49882 / DSM 28221 / CCUG 30454 / Houston 1) (Rochalimaea henselae).